Here is a 252-residue protein sequence, read N- to C-terminus: 3-dehydroquinate dehydratase (252 aa).

3-dehydroquinate-binding positions include S21, 46–48, and R82; that span reads EWR. The active-site Proton donor/acceptor is the H143. K170 (schiff-base intermediate with substrate) is an active-site residue. Positions 213, 232, and 236 each coordinate 3-dehydroquinate.

This sequence belongs to the type-I 3-dehydroquinase family. As to quaternary structure, homodimer.

The enzyme catalyses 3-dehydroquinate = 3-dehydroshikimate + H2O. It participates in metabolic intermediate biosynthesis; chorismate biosynthesis; chorismate from D-erythrose 4-phosphate and phosphoenolpyruvate: step 3/7. In terms of biological role, involved in the third step of the chorismate pathway, which leads to the biosynthesis of aromatic amino acids. Catalyzes the cis-dehydration of 3-dehydroquinate (DHQ) and introduces the first double bond of the aromatic ring to yield 3-dehydroshikimate. This chain is 3-dehydroquinate dehydratase, found in Escherichia coli O139:H28 (strain E24377A / ETEC).